The primary structure comprises 326 residues: MAVYTDINEIELGAFLRHYDIGTLTSYKGIAEGVENSNYLLHTSSGSFILTLYEKRTNREDLPFFLGLMQHLAKRGLECPQPVVRNDGAMIGQLAGRPAAIVTFLEGMWMRRPTVAHCEAVGEGLAHMHLAGADFPMRRRNGLTLPDWRPLWNLSRKCADTVERGLVAETEADLDFLEKNWPADLPQGVIHADLFPDNAFFLGDRLSGFIDFYFACTDILAYDVAVCLNAWCFEKDFSYNRTKGAALLRGYTSVRPLSEAEANALLVLARGAAVRFMLTRLYDWLTVPAGSFVVKKDPMEYVRRMRFHRQIESGAEYGLEMQGVAA.

Belongs to the pseudomonas-type ThrB family.

The catalysed reaction is L-homoserine + ATP = O-phospho-L-homoserine + ADP + H(+). It functions in the pathway amino-acid biosynthesis; L-threonine biosynthesis; L-threonine from L-aspartate: step 4/5. In Brucella melitensis biotype 1 (strain ATCC 23456 / CCUG 17765 / NCTC 10094 / 16M), this protein is Homoserine kinase.